A 38-amino-acid polypeptide reads, in one-letter code: Large ribosomal subunit protein bL36A (38 aa).

Belongs to the bacterial ribosomal protein bL36 family.

The protein is Large ribosomal subunit protein bL36A of Enterobacter sp. (strain 638).